Reading from the N-terminus, the 535-residue chain is Peroxisomal membrane protein PEX29 (535 aa).

Transmembrane regions (helical) follow at residues 139–159 and 176–196; these read LSVPFVLIDQVIIIFSWSKPL and ILLLSLPFFYTCFEIIVPAYM. N-linked (GlcNAc...) asparagine glycosylation is present at Asn239. A helical membrane pass occupies residues 247 to 267; the sequence is MLLYVMSYDFVTSLIVKYLYF. Asn271 carries an N-linked (GlcNAc...) asparagine glycan. 2 helical membrane-spanning segments follow: residues 272–292 and 297–317; these read ITIFIFVALLTSGTLLTLFGA and AMLPFIKVTLSVGLWAATIAM. Residues Asn450 and Asn515 are each glycosylated (N-linked (GlcNAc...) asparagine). The disordered stretch occupies residues 511–535; it reads AHRRNKSMESSNSLHPVKSIDSVDG.

It belongs to the PEX28-32 family. PEX29 subfamily.

It is found in the endoplasmic reticulum membrane. Functionally, with PEX23, contributes to the formation of endoplasmic reticulum-mitochondria junctions which are important for mitochondrial function. Involved in lipid dropplets formation. The chain is Peroxisomal membrane protein PEX29 from Ogataea parapolymorpha (strain ATCC 26012 / BCRC 20466 / JCM 22074 / NRRL Y-7560 / DL-1) (Yeast).